The sequence spans 453 residues: Trypanin (453 aa).

Basic and acidic residues predominate over residues 1–10 (MPPRTAAERG). The disordered stretch occupies residues 1-22 (MPPRTAAERGGRRKSVKAPPPV). Coiled-coil stretches lie at residues 60–156 (TITK…EMNV) and 185–377 (SCEA…LVEE).

It belongs to the DRC4 family.

It localises to the cytoplasm. The protein resides in the cytoskeleton. It is found in the cell projection. Its subcellular location is the cilium. The protein localises to the flagellum. Its function is as follows. Cytoskeletal linker that plays a central role in the flagellum cell motility. Required for directional cell motility. Plays a role as part of a dynein regulatory system that regulates flagellar beat in response to signals from the central pair apparatus and radial spokes in procyclic cells. Also plays an essential role in the bloodstream form of the trypanosomes as its silencing is lethal for the circulating form. The chain is Trypanin from Trypanosoma brucei rhodesiense.